The chain runs to 329 residues: DGAT1/2-independent enzyme synthesizing storage lipids (329 aa).

Residues 1–50 lie on the Lumenal side of the membrane; that stretch reads MIDNNQTCAAGQDSVPYVTCMIYVLEEWLGVEQLEDYLNFANHLLWVFTP. Asparagine 5 carries an N-linked (GlcNAc...) asparagine glycan. A helical transmembrane segment spans residues 51–71; the sequence is LILLILPYFTIFLLYLTIIFL. Topologically, residues 72–120 are cytoplasmic; sequence HIYKRKNVLKEAYSHNLWDGARKTVATLWDGHAAVWHGYEVHGMEKIPE. A helical transmembrane segment spans residues 121–141; sequence GAALIIFYHGAIPIDFYYFMA. Residue histidine 129 is part of the active site. The Lumenal segment spans residues 142–329; the sequence is KIFIQKGRTC…DRFHKEQKAH (188 aa).

This sequence belongs to the diacylglycerol acyltransferase family. Highly divergent. Widely expressed, with highest level in the brain, followed by lung and duodenum, and lowest levels in tongue, testis, skin and ileum.

The protein localises to the endoplasmic reticulum membrane. The enzyme catalyses a 1,2-diacylglycerol + a 1,2-diacyl-sn-glycero-3-phosphocholine = a triacylglycerol + a 1-acyl-sn-glycero-3-phosphocholine. The catalysed reaction is a 1-O-alkyl-2-acyl-sn-glycero-3-phosphocholine + a 1,2-diacylglycerol = a 1-O-alkyl-sn-glycero-3-phosphocholine + a triacylglycerol. It catalyses the reaction a 2-acylglycerol + an acyl-CoA = a 1,2-diacylglycerol + CoA. It carries out the reaction an acyl-CoA + a 1,2-diacyl-sn-glycerol = a triacyl-sn-glycerol + CoA. The enzyme catalyses 2-(9Z-octadecenoyl)-glycerol + (9Z)-octadecenoyl-CoA = 1,2-di-(9Z-octadecenoyl)-glycerol + CoA. The catalysed reaction is 1,2-di-(9Z-octadecenoyl)-sn-glycerol + (9Z)-octadecenoyl-CoA = 1,2,3-tri-(9Z-octadecenoyl)-glycerol + CoA. With respect to regulation, acyltransferase activity is specifically inhibited by TMX1 at the endoplasmic reticulum, restricting accumulation of triacylglycerol. Catalytic subunit of the alternative triglyceride biosynthesis pathway, which mediates formation of triacylglycerol from diacylglycerol and membrane phospholipids. Synthesizes triacylglycerol at the expense of membrane phospholipids, such as phosphatidylcholine (PC) and its ether-linked form (ePC), thereby altering the composition of membranes. The alternative triglyceride biosynthesis pathway is probably required to provide the energy required for rapid growth when fuel sources are limiting. It maintains mitochondrial function during periods of extracellular lipid starvation. Can also use acyl-CoA as donor: acts as a acyl-CoA:monoacylglycerol acyltransferase (MGAT), but also shows acyl-CoA:diacylglycerol acyltransferase (DGAT) activity. The chain is DGAT1/2-independent enzyme synthesizing storage lipids from Mus musculus (Mouse).